The chain runs to 415 residues: uncharacterized protein (415 aa).

His-88 is a Zn(2+) binding site. The active site involves Asp-90. Asp-121 provides a ligand contact to Zn(2+). Residue Glu-155 is the Proton acceptor of the active site. Zn(2+)-binding residues include Glu-156, Asp-185, and His-392.

Belongs to the peptidase M20A family. The cofactor is Zn(2+). It depends on Co(2+) as a cofactor.

This is an uncharacterized protein from Methanococcus maripaludis (strain DSM 14266 / JCM 13030 / NBRC 101832 / S2 / LL).